Here is a 396-residue protein sequence, read N- to C-terminus: Alanine racemase (396 aa).

The active-site Proton acceptor; specific for D-alanine is the Lys46. Residue Lys46 is modified to N6-(pyridoxal phosphate)lysine. Arg145 is a binding site for substrate. Tyr280 serves as the catalytic Proton acceptor; specific for L-alanine. Position 328 (Met328) interacts with substrate.

This sequence belongs to the alanine racemase family. Pyridoxal 5'-phosphate is required as a cofactor.

The catalysed reaction is L-alanine = D-alanine. The protein operates within amino-acid biosynthesis; D-alanine biosynthesis; D-alanine from L-alanine: step 1/1. Functionally, catalyzes the interconversion of L-alanine and D-alanine. May also act on other amino acids. The chain is Alanine racemase (alr) from Brucella suis (strain ATCC 23445 / NCTC 10510).